Consider the following 418-residue polypeptide: Tyrosine--tRNA ligase (418 aa).

Tyr-34 provides a ligand contact to L-tyrosine. The short motif at 39-48 (PTADSLHLGH) is the 'HIGH' region element. 2 residues coordinate L-tyrosine: Tyr-169 and Gln-173. The short motif at 229–233 (KFGKS) is the 'KMSKS' region element. Lys-232 serves as a coordination point for ATP. One can recognise an S4 RNA-binding domain in the interval 352 to 418 (HNIVELLVTA…GKKKYFVLTY (67 aa)).

This sequence belongs to the class-I aminoacyl-tRNA synthetase family. TyrS type 1 subfamily. In terms of assembly, homodimer.

It is found in the cytoplasm. It catalyses the reaction tRNA(Tyr) + L-tyrosine + ATP = L-tyrosyl-tRNA(Tyr) + AMP + diphosphate + H(+). Its function is as follows. Catalyzes the attachment of tyrosine to tRNA(Tyr) in a two-step reaction: tyrosine is first activated by ATP to form Tyr-AMP and then transferred to the acceptor end of tRNA(Tyr). This chain is Tyrosine--tRNA ligase, found in Streptococcus mutans serotype c (strain ATCC 700610 / UA159).